The chain runs to 404 residues: Nesprin-4 (404 aa).

Disordered stretches follow at residues 1-91 and 277-347; these read MALS…GGKH and GQRG…GAPD. Over 1 to 355 the chain is Cytoplasmic; that stretch reads MALSLPLGPR…PDPASRQPLT (355 aa). The span at 39–52 shows a compositional bias: polar residues; sequence EESTSPEQAQTLGQ. Positions 307 to 320 are enriched in basic residues; it reads HQKRLARHQRHSLL. Residues 347–404 enclose the KASH domain; it reads DPASRQPLTFLLILFLLFLLLVGAMFLLPASGGPCCSHARIPRTPYLVLSYVNGLPPV. The helical; Anchor for type IV membrane protein transmembrane segment at 356–376 threads the bilayer; sequence FLLILFLLFLLLVGAMFLLPA. Over 377 to 404 the chain is Perinuclear space; it reads SGGPCCSHARIPRTPYLVLSYVNGLPPV.

This sequence belongs to the nesprin family. In terms of assembly, core component of LINC complexes which are composed of inner nuclear membrane SUN domain-containing proteins coupled to outer nuclear membrane KASH domain-containing nesprins. SUN and KASH domain-containing proteins seem to bind each other promiscuously; however, differentially expression of LINC complex constituents can give rise to specific assemblies. Probably part of a SUN1-containing LINC complex. Interacts with kinesins KIF5B and KLC1. In terms of processing, the disulfid bond with SUN1 or SUN2 is required for stability of the respective LINC complex under tensile forces.

The protein localises to the nucleus outer membrane. As a component of the LINC (LInker of Nucleoskeleton and Cytoskeleton) complex, involved in the connection between the nuclear lamina and the cytoskeleton. The nucleocytoplasmic interactions established by the LINC complex play an important role in the transmission of mechanical forces across the nuclear envelope and in nuclear movement and positioning. Behaves as a kinesin cargo, providing a functional binding site for kinesin-1 at the nuclear envelope. Hence may contribute to the establishment of secretory epithelial morphology by promoting kinesin-dependent apical migration of the centrosome and Golgi apparatus and basal localization of the nucleus. This Homo sapiens (Human) protein is Nesprin-4 (SYNE4).